The chain runs to 408 residues: Voltage-gated potassium channel subunit beta-1 (408 aa).

NADP(+)-binding residues include T97, W98, Q104, and D126. The active-site Proton donor/acceptor is the Y131. N199, S229, R230, Q255, W284, S285, P286, L287, A288, C289, K295, R305, G364, S366, Q370, E373, and N374 together coordinate NADP(+).

It belongs to the shaker potassium channel beta subunit family. In terms of assembly, homotetramer. Interaction with tetrameric potassium channel alpha subunits gives rise to a heterooctamer. Identified in potassium channel complexes containing KCNA1, KCNA2, KCNA4, KCNA5, KCNA6, KCNAB1 and KCNAB2. Part of a complex containing KCNA1, KCNA4 and LGI1; interaction with LGI1 inhibits down-regulation of KCNA1 channel activity. Interacts with the dimer formed by GNB1 and GNG2; this enhances KCNA1 binding. Interacts with SQSTM1. As to expression, expression most abundant in aorta. Also high in left ventricle. Also detected in right ventricle, atrium, brain, skeletal muscle and kidney. Not detected in liver.

It localises to the cytoplasm. The protein localises to the membrane. Its subcellular location is the cell membrane. It catalyses the reaction a primary alcohol + NADP(+) = an aldehyde + NADPH + H(+). The enzyme catalyses a secondary alcohol + NADP(+) = a ketone + NADPH + H(+). Its function is as follows. Regulatory subunit of the voltage-gated potassium (Kv) Shaker channels composed of pore-forming and potassium-conducting alpha subunits and of regulatory beta subunits. The beta-1/KCNAB1 cytoplasmic subunit mediates closure of delayed rectifier potassium channels by physically obstructing the pore via its N-terminal domain and increases the speed of channel closure for other family members. Promotes the inactivation of Kv1.1/KCNA1, Kv1.2/KCNA2, Kv1.4/KCNA4, Kv1.5/KCNA5 and Kv1.6/KCNA6 alpha subunit-containing channels. Displays nicotinamide adenine dinucleotide phosphate (NADPH)-dependent aldoketoreductase activity by catalyzing the NADPH-dependent reduction of a variety of endogenous aldehydes and ketones. The binding of NADPH is required for efficient down-regulation of potassium channel activity. Oxidation of the bound NADPH restrains N-terminal domain from blocking the channel, thereby decreasing N-type inactivation of potassium channel activity. The chain is Voltage-gated potassium channel subunit beta-1 (KCNAB1) from Mustela putorius (European polecat).